A 78-amino-acid polypeptide reads, in one-letter code: Short neurotoxin SNTX6 (78 aa).

A signal peptide spans 1–21 (MKTLLLTFLVVTIVCLDLGYT). 4 disulfides stabilise this stretch: cysteine 24–cysteine 40, cysteine 33–cysteine 58, cysteine 62–cysteine 70, and cysteine 71–cysteine 76.

The protein belongs to the three-finger toxin family. Short-chain subfamily. As to expression, expressed by the venom gland.

Its subcellular location is the secreted. In terms of biological role, this three-finger toxin binds and inhibits the nicotinic acetylcholine receptor (nAChR). The protein is Short neurotoxin SNTX6 of Ophiophagus hannah (King cobra).